The primary structure comprises 267 residues: uncharacterized protein (267 aa).

Belongs to the lin-8 family.

This is an uncharacterized protein from Caenorhabditis elegans.